Reading from the N-terminus, the 370-residue chain is Cysteine-type anaerobic sulfatase-maturating enzyme (370 aa).

Residues 1-227 (MPPLSLLIKP…LKNLFDFWYE (227 aa)) enclose the Radical SAM core domain. [4Fe-4S] cluster contacts are provided by C15 and C19. An S-adenosyl-L-methionine-binding site is contributed by Y21. A [4Fe-4S] cluster-binding site is contributed by C22. Positions 66, 122, 134, and 195 each coordinate S-adenosyl-L-methionine. [4Fe-4S] cluster contacts are provided by C255, C261, and C276. D277 acts as the Proton acceptor in catalysis. Positions 317, 320, 326, 330, and 348 each coordinate [4Fe-4S] cluster.

Belongs to the radical SAM superfamily. Anaerobic sulfatase-maturating enzyme family. As to quaternary structure, monomer. [4Fe-4S] cluster is required as a cofactor.

It carries out the reaction L-cysteinyl-[sulfatase] + S-adenosyl-L-methionine + H2O = 3-oxo-L-alanyl-[sulfatase] + hydrogen sulfide + 5'-deoxyadenosine + L-methionine + 2 H(+). Its pathway is protein modification; sulfatase oxidation. Its function is as follows. Involved in 'Cys-type' sulfatase maturation under anaerobic conditions. Catalyzes the post-translational modification of cysteine ('Cys-51' in the arylsulfatase CPF_0221) into 3-oxoalanine (also known as C(alpha)-formylglycine (FGly)), by a free radical chemical mechanism initiated via the reductive cleavage of S-adenosyl-L-methionine (SAM). Is also able to oxidize a serine residue in a synthetic substrate to FGly in vitro, and in a serine variant of a Cys-type sulfatase in vivo, but this activity is not physiological. Converts threonyl peptides to the corresponding ketone product, and also allo-threonyl peptides, but with a significantly reduced efficiency. In Clostridium perfringens (strain ATCC 13124 / DSM 756 / JCM 1290 / NCIMB 6125 / NCTC 8237 / Type A), this protein is Cysteine-type anaerobic sulfatase-maturating enzyme.